The primary structure comprises 160 residues: Cytochrome c-type biogenesis protein CcmE (160 aa).

Residues 1 to 7 (MTRKQRR) are Cytoplasmic-facing. A helical; Signal-anchor for type II membrane protein transmembrane segment spans residues 8–28 (ATFIAVSLGILALAVGLVLYA). The Periplasmic portion of the chain corresponds to 29 to 160 (MRDSIVYFYS…SETYGQGSYP (132 aa)). Heme-binding residues include histidine 122 and tyrosine 126. The tract at residues 141–160 (WQGEGAEAPHSETYGQGSYP) is disordered.

The protein belongs to the CcmE/CycJ family.

The protein resides in the cell inner membrane. Heme chaperone required for the biogenesis of c-type cytochromes. Transiently binds heme delivered by CcmC and transfers the heme to apo-cytochromes in a process facilitated by CcmF and CcmH. The sequence is that of Cytochrome c-type biogenesis protein CcmE from Parvibaculum lavamentivorans (strain DS-1 / DSM 13023 / NCIMB 13966).